The following is a 228-amino-acid chain: Probable C4-dicarboxylate response regulator DctR (228 aa).

The 117-residue stretch at 7–123 (TVLLIEDDPM…RMKQALEQYR (117 aa)) folds into the Response regulatory domain. Asp-58 carries the 4-aspartylphosphate modification. A DNA-binding region (H-T-H motif) is located at residues 180–199 (AEEVADGVGIARVTARRYLE).

In terms of processing, phosphorylated by DctS.

The protein resides in the cytoplasm. Member of the two-component regulatory system DctS/DctR. Essential for expression of DctP. The sequence is that of Probable C4-dicarboxylate response regulator DctR (dctR) from Priestia megaterium (Bacillus megaterium).